Here is a 94-residue protein sequence, read N- to C-terminus: Co-chaperonin GroES (94 aa).

It belongs to the GroES chaperonin family. Heptamer of 7 subunits arranged in a ring. Interacts with the chaperonin GroEL.

Its subcellular location is the cytoplasm. In terms of biological role, together with the chaperonin GroEL, plays an essential role in assisting protein folding. The GroEL-GroES system forms a nano-cage that allows encapsulation of the non-native substrate proteins and provides a physical environment optimized to promote and accelerate protein folding. GroES binds to the apical surface of the GroEL ring, thereby capping the opening of the GroEL channel. The chain is Co-chaperonin GroES from Streptococcus pneumoniae (strain Taiwan19F-14).